The primary structure comprises 374 residues: N5-carboxyaminoimidazole ribonucleotide synthase (374 aa).

ATP is bound by residues R108, K148, 153–159 (GYDGKGQ), 183–186 (EKYL), E191, H214, and 266–267 (NE). An ATP-grasp domain is found at 112 to 296 (KETLKSAGTK…QFDTHILAVT (185 aa)).

Belongs to the PurK/PurT family. Homodimer.

The catalysed reaction is 5-amino-1-(5-phospho-beta-D-ribosyl)imidazole + hydrogencarbonate + ATP = 5-carboxyamino-1-(5-phospho-D-ribosyl)imidazole + ADP + phosphate + 2 H(+). It functions in the pathway purine metabolism; IMP biosynthesis via de novo pathway; 5-amino-1-(5-phospho-D-ribosyl)imidazole-4-carboxylate from 5-amino-1-(5-phospho-D-ribosyl)imidazole (N5-CAIR route): step 1/2. In terms of biological role, catalyzes the ATP-dependent conversion of 5-aminoimidazole ribonucleotide (AIR) and HCO(3)(-) to N5-carboxyaminoimidazole ribonucleotide (N5-CAIR). The protein is N5-carboxyaminoimidazole ribonucleotide synthase of Staphylococcus aureus (strain MRSA252).